The chain runs to 178 residues: Inner membrane-spanning protein YciB (178 aa).

5 consecutive transmembrane segments (helical) span residues 22-42 (IFWA…YSWY), 50-70 (MTLV…YFHN), 76-96 (WKVT…QWVM), 121-141 (IAWA…AFWL), and 149-169 (FKVF…GVYI).

Belongs to the YciB family.

Its subcellular location is the cell inner membrane. Functionally, plays a role in cell envelope biogenesis, maintenance of cell envelope integrity and membrane homeostasis. This is Inner membrane-spanning protein YciB from Cronobacter sakazakii (strain ATCC BAA-894) (Enterobacter sakazakii).